A 372-amino-acid polypeptide reads, in one-letter code: Queuine tRNA-ribosyltransferase (372 aa).

Aspartate 89 acts as the Proton acceptor in catalysis. Residues aspartate 89 to phenylalanine 93, aspartate 161, and glycine 232 each bind substrate. Residues glycine 262–serine 268 are RNA binding. The Nucleophile role is filled by aspartate 281. The tract at residues threonine 286 to arginine 290 is RNA binding; important for wobble base 34 recognition. Residues cysteine 319, cysteine 321, cysteine 324, and histidine 351 each coordinate Zn(2+).

The protein belongs to the queuine tRNA-ribosyltransferase family. In terms of assembly, homodimer. Within each dimer, one monomer is responsible for RNA recognition and catalysis, while the other monomer binds to the replacement base PreQ1. Zn(2+) serves as cofactor.

It carries out the reaction 7-aminomethyl-7-carbaguanine + guanosine(34) in tRNA = 7-aminomethyl-7-carbaguanosine(34) in tRNA + guanine. It participates in tRNA modification; tRNA-queuosine biosynthesis. Catalyzes the base-exchange of a guanine (G) residue with the queuine precursor 7-aminomethyl-7-deazaguanine (PreQ1) at position 34 (anticodon wobble position) in tRNAs with GU(N) anticodons (tRNA-Asp, -Asn, -His and -Tyr). Catalysis occurs through a double-displacement mechanism. The nucleophile active site attacks the C1' of nucleotide 34 to detach the guanine base from the RNA, forming a covalent enzyme-RNA intermediate. The proton acceptor active site deprotonates the incoming PreQ1, allowing a nucleophilic attack on the C1' of the ribose to form the product. After dissociation, two additional enzymatic reactions on the tRNA convert PreQ1 to queuine (Q), resulting in the hypermodified nucleoside queuosine (7-(((4,5-cis-dihydroxy-2-cyclopenten-1-yl)amino)methyl)-7-deazaguanosine). The polypeptide is Queuine tRNA-ribosyltransferase (Chlamydia abortus (strain DSM 27085 / S26/3) (Chlamydophila abortus)).